Consider the following 212-residue polypeptide: RING-H2 finger protein ATL68 (212 aa).

A helical transmembrane segment spans residues 24-44 (LGLGYSIAIALGFLVLISTII). The RING-type; atypical zinc-finger motif lies at 136–178 (CSICLCEYMEEEMLRMMPECKHYFHVYCLDAWLKLNGSCPVCR). Residues 182–212 (LPTPQSTPQSTPLSEVVPLSQYAADRRRSRR) are disordered. Residues 185–195 (PQSTPQSTPLS) show a composition bias toward low complexity.

This sequence belongs to the RING-type zinc finger family. ATL subfamily.

It localises to the membrane. It catalyses the reaction S-ubiquitinyl-[E2 ubiquitin-conjugating enzyme]-L-cysteine + [acceptor protein]-L-lysine = [E2 ubiquitin-conjugating enzyme]-L-cysteine + N(6)-ubiquitinyl-[acceptor protein]-L-lysine.. It participates in protein modification; protein ubiquitination. This is RING-H2 finger protein ATL68 (ATL68) from Arabidopsis thaliana (Mouse-ear cress).